Here is a 339-residue protein sequence, read N- to C-terminus: UDP-N-acetylenolpyruvoylglucosamine reductase (339 aa).

In terms of domain architecture, FAD-binding PCMH-type spans 18-189 (GVEVKAKWFA…LRVRFALNRV (172 aa)). Arg-166 is an active-site residue. Ser-239 acts as the Proton donor in catalysis. Glu-335 is an active-site residue.

This sequence belongs to the MurB family. FAD is required as a cofactor.

It localises to the cytoplasm. The enzyme catalyses UDP-N-acetyl-alpha-D-muramate + NADP(+) = UDP-N-acetyl-3-O-(1-carboxyvinyl)-alpha-D-glucosamine + NADPH + H(+). It participates in cell wall biogenesis; peptidoglycan biosynthesis. In terms of biological role, cell wall formation. The chain is UDP-N-acetylenolpyruvoylglucosamine reductase from Pseudomonas fluorescens (strain ATCC BAA-477 / NRRL B-23932 / Pf-5).